The sequence spans 66 residues: Pancreatic polypeptide prohormone (66 aa).

Tyrosine 36 is subject to Tyrosine amide. Positions 60–66 are excised as a propeptide; it reads ELSPMDV.

The protein belongs to the NPY family.

The protein localises to the secreted. In terms of biological role, hormone secreted by pancreatic cells that acts as a regulator of pancreatic and gastrointestinal functions probably by signaling through the G protein-coupled receptor NPY4R2. The chain is Pancreatic polypeptide prohormone (PPY) from Felis catus (Cat).